Reading from the N-terminus, the 502-residue chain is Probable cytosol aminopeptidase (502 aa).

2 residues coordinate Mn(2+): K269 and D274. K281 is a catalytic residue. 3 residues coordinate Mn(2+): D292, D351, and E353. R355 is an active-site residue.

The protein belongs to the peptidase M17 family. Mn(2+) is required as a cofactor.

The protein resides in the cytoplasm. The enzyme catalyses Release of an N-terminal amino acid, Xaa-|-Yaa-, in which Xaa is preferably Leu, but may be other amino acids including Pro although not Arg or Lys, and Yaa may be Pro. Amino acid amides and methyl esters are also readily hydrolyzed, but rates on arylamides are exceedingly low.. It carries out the reaction Release of an N-terminal amino acid, preferentially leucine, but not glutamic or aspartic acids.. In terms of biological role, presumably involved in the processing and regular turnover of intracellular proteins. Catalyzes the removal of unsubstituted N-terminal amino acids from various peptides. This chain is Probable cytosol aminopeptidase, found in Shewanella frigidimarina (strain NCIMB 400).